Reading from the N-terminus, the 498-residue chain is ATP synthase subunit beta, chloroplastic (498 aa).

G172–T179 serves as a coordination point for ATP.

This sequence belongs to the ATPase alpha/beta chains family. In terms of assembly, F-type ATPases have 2 components, CF(1) - the catalytic core - and CF(0) - the membrane proton channel. CF(1) has five subunits: alpha(3), beta(3), gamma(1), delta(1), epsilon(1). CF(0) has four main subunits: a(1), b(1), b'(1) and c(9-12).

It localises to the plastid. The protein localises to the chloroplast thylakoid membrane. The catalysed reaction is ATP + H2O + 4 H(+)(in) = ADP + phosphate + 5 H(+)(out). Functionally, produces ATP from ADP in the presence of a proton gradient across the membrane. The catalytic sites are hosted primarily by the beta subunits. This chain is ATP synthase subunit beta, chloroplastic, found in Salacca zalacca (Snake palm).